We begin with the raw amino-acid sequence, 126 residues long: Bleomycin resistance protein (126 aa).

The VOC domain occupies 1-119 (MTDQATPNLP…DGTLLRLIQN (119 aa)).

Belongs to the bleomycin resistance protein family.

Its function is as follows. Binding protein with a strong affinity to the bleomycin family of antibiotics. Binds to CL990; an antimitotic-antibiotic compound. The protein is Bleomycin resistance protein (ble) of Klebsiella pneumoniae.